The chain runs to 2437 residues: Neurogenic locus notch homolog protein 1 (2437 aa).

Positions 1–20 (MNRFLVKLTLLTAASLATVA) are cleaved as a signal peptide. 4 EGF-like domains span residues 21-57 (QGQR…AQCQ), 58-98 (FPNP…RLCL), 101-138 (VNHA…KTCQ), and 139-175 (LADP…QTCR). Residues 21–1726 (QGQRCSEYCQ…GGPPKTGEMY (1706 aa)) are Extracellular-facing. Cystine bridges form between C25-C35, C29-C45, C47-C56, C62-C73, C67-C86, C88-C97, C105-C116, C110-C126, C128-C137, C143-C154, C148-C163, C165-C174, C181-C194, C188-C203, C205-C214, C221-C232, C226-C242, C244-C253, C260-C271, C265-C280, C282-C291, C298-C311, C305-C320, C322-C331, C338-C349, C343-C358, C360-C369, C375-C386, C380-C397, C399-C408, C415-C428, C422-C437, C439-C448, C455-C466, C460-C475, C477-C486, C493-C503, C498-C512, C514-C523, C530-C541, C535-C550, C552-C561, C568-C578, C573-C587, C589-C598, C605-C616, C610-C625, C627-C636, C643-C653, C648-C662, C664-C673, C680-C691, C685-C700, C702-C711, C718-C728, C723-C737, C739-C748, C755-C766, C760-C775, C777-C786, C793-C804, C798-C813, C815-C824, C831-C842, C836-C853, C855-C864, C871-C882, C876-C891, C893-C902, C909-C920, C914-C929, C931-C940, C947-C958, C952-C967, C969-C978, C985-C996, C990-C1005, C1007-C1016, C1023-C1034, C1028-C1043, C1045-C1054, C1061-C1072, C1066-C1081, C1083-C1092, C1099-C1120, C1114-C1129, C1131-C1140, C1147-C1158, C1152-C1167, C1169-C1178, C1185-C1196, C1190-C1205, C1207-C1216, C1223-C1242, C1236-C1251, C1253-C1262, C1269-C1282, C1274-C1291, C1293-C1302, C1309-C1320, C1314-C1332, C1334-C1343, C1350-C1361, C1355-C1370, C1372-C1381, C1389-C1400, C1394-C1411, C1413-C1422, C1447-C1470, C1452-C1465, and C1461-C1477. The region spanning 177–215 (DVNECAVSPSPCRNGGTCINEVGSYLCRCPPEYTGPHCQ) is the EGF-like 5; calcium-binding domain. The EGF-like 6 domain maps to 217-254 (LYQPCLPSPCRSGGTCVQTSDTTHTCSCLPGFTGQTCE). O-linked (Fuc...) threonine; alternate glycosylation is present at T231. O-linked (GalNAc...) threonine; alternate glycosylation is present at T231. The 37-residue stretch at 256–292 (NVDDCTQHACENGGPCIDGINTYNCHCDKHWTGQYCT) folds into the EGF-like 7; calcium-binding domain. Residues 294–332 (DVDECELSPNACQNGGTCHNTIGGFHCVCVNGWTGDDCS) enclose the EGF-like 8; calcium-binding domain. The EGF-like 9; calcium-binding domain maps to 334 to 370 (NIDDCASAACSHGATCHDRVASFFCECPHGRTGLLCH). The 39-residue stretch at 371-409 (LDDACISNPCQKGSNCDTNPVSGKAICTCPPGYTGSACN) folds into the EGF-like 10 domain. The EGF-like 11; calcium-binding domain occupies 411–449 (DIDECSLGANPCEHGGRCLNTKGSFQCKCLQGYEGPRCE). Residues 451-487 (DVNECKSNPCQNDATCLDQIGGFHCICMPGYEGVFCQ) form the EGF-like 12; calcium-binding domain. Positions 489 to 524 (NSDDCASQPCLNGKCIDKINSFHCECPKGFSGSLCQ) constitute an EGF-like 13; calcium-binding domain. Residues 526-562 (DVDECASTPCKNGAKCTDGPNKYTCECTPGFSGIHCE) form the EGF-like 14; calcium-binding domain. The EGF-like 15; calcium-binding domain occupies 564-599 (DINECASSPCHYGVCRDGVASFTCDCRPGYTGRLCE). One can recognise an EGF-like 16; calcium-binding domain in the interval 601–637 (NINECLSQPCRNGGTCQDRENAYICTCPKGTTGVNCE). An EGF-like 17; calcium-binding domain is found at 639–674 (NIDDCKRKPCDYGKCIDKINGYECVCEPGYSGSMCN). An EGF-like 18; calcium-binding domain is found at 676–712 (NIDDCALNPCHNGGTCIDGVNSFTCLCPDGFRDATCL). Residues 714-749 (QHNECSSNPCIHGSCLDQINSYRCVCEAGWMGRNCD) form the EGF-like 19; calcium-binding domain. An EGF-like 20; calcium-binding domain is found at 751 to 787 (NINECLSNPCVNGGTCKDMTSGYLCTCRAGFSGPNCQ). The 37-residue stretch at 789–825 (NINECASNPCLNQGSCIDDVAGFKCNCMLPYTGEVCE) folds into the EGF-like 21; calcium-binding domain. In terms of domain architecture, EGF-like 22 spans 827–865 (VLAPCSPRPCKNGGVCRESEDFQSFSCNCPAGWQGQTCE). Residues 867–903 (DINECVRNPCTNGGVCENLRGGFQCRCNPGFTGALCE) form the EGF-like 23; calcium-binding domain. Residues 905-941 (DIDDCEPNPCSNGGVCQDRVNGFVCVCLAGFRGERCA) enclose the EGF-like 24; calcium-binding domain. Residues 943–979 (DIDECVSAPCRNGGNCTDCVNSYTCSCPAGFSGINCE) form the EGF-like 25; calcium-binding domain. Residue N957 is glycosylated (N-linked (GlcNAc...) asparagine). Positions 981 to 1017 (NTPDCTESSCFNGGTCVDGISSFSCVCLPGFTGNYCQ) constitute an EGF-like 26 domain. The EGF-like 27; calcium-binding domain maps to 1019-1055 (DVNECDSRPCQNGGSCQDGYGTYKCTCPHGYTGLNCQ). 2 consecutive EGF-like domains span residues 1057–1093 (LVRW…IYCD) and 1095–1141 (PSVS…SYCQ). Positions 1143–1179 (QVDECQPNPCQNGATCTDYLGGYSCECVPGYHGMNCS) constitute an EGF-like 30; calcium-binding domain. A glycan (N-linked (GlcNAc...) asparagine) is linked at N1177. The 37-residue stretch at 1181-1217 (EINECLSQPCQNGGTCIDLVNTYKCSCPRGTQGVHCE) folds into the EGF-like 31; calcium-binding domain. Residues 1219–1263 (DIDDCSPSVDPLTGEPRCFNGGRCVDRVGGYGCVCPAGFVGERCE) form the EGF-like 32; calcium-binding domain. 4 EGF-like domains span residues 1265 to 1303 (DVNE…KRCE), 1305 to 1344 (VFNG…SSCE), 1346 to 1382 (DSQS…HECQ), and 1385 to 1423 (MDSP…LLCH). An O-linked (Fuc...) threonine; alternate glycan is attached at T1399. T1399 carries an O-linked (GalNAc...) threonine; alternate glycan. LNR repeat units follow at residues 1447-1487 (CEIA…PWQN), 1488-1525 (CSAA…LEGQ), and 1526-1566 (CNPL…VPQK). Residue N1487 is glycosylated (N-linked (GlcNAc...) asparagine). Disulfide bonds link C1488-C1512, C1494-C1507, C1503-C1519, C1526-C1552, C1534-C1547, and C1543-C1559. N1585 is a glycosylation site (N-linked (GlcNAc...) asparagine). Residues 1727–1747 (PMFLVLLALAVLALAAVGVVV) traverse the membrane as a helical segment. At 1748–2437 (SRKRKREHGQ…QMNHIPEAFK (690 aa)) the chain is on the cytoplasmic side. The segment at 1770-1790 (KKKRREPVGEDSVGLKPLKNS) is disordered. ANK repeat units follow at residues 1867 to 1910 (DGFT…NLHN), 1915 to 1944 (TGET…DANV), 1948 to 1978 (MGRT…DLDA), 1982 to 2011 (DGTT…DPNA), 2015 to 2044 (SGKS…NKDL), and 2048 to 2077 (KEET…NRDI). Disordered regions lie at residues 2127 to 2174 (IKPS…GGIM) and 2356 to 2437 (RMAP…EAFK). A compositionally biased stretch (polar residues) spans 2356 to 2387 (RMAPPISSTQFLTPPSQHSYSNPMDNTPNHQQ). Positions 2396 to 2411 (PSAGSPDQWSSSSPHS) are enriched in low complexity. A compositionally biased stretch (polar residues) spans 2412 to 2429 (NLSDWSEGISSPPTSMQM).

The protein belongs to the NOTCH family. Post-translationally, synthesized in the endoplasmic reticulum as an inactive form which is proteolytically cleaved by a furin-like convertase in the trans-Golgi network before it reaches the plasma membrane to yield an active, ligand-accessible form. Cleavage results in a C-terminal fragment N(TM) and a N-terminal fragment N(EC). Following ligand binding, it is cleaved by adam17 to yield a membrane-associated intermediate fragment called notch extracellular truncation (NEXT). Following endocytosis, this fragment is then cleaved by presenilin dependent gamma-secretase to release a Notch-derived peptide containing the intracellular domain (NICD) from the membrane. In terms of processing, O-glycosylated on the EGF-like domains. Contains both O-linked fucose and O-linked glucose. O-linked glycosylation by galnt11 is involved in determination of left/right symmetry: glycosylation promotes activation of notch1, possibly by promoting cleavage by adam17, modulating the balance between motile and immotile (sensory) cilia at the left-right organiser (LRO).

Its subcellular location is the cell membrane. It is found in the nucleus. Its function is as follows. Functions as a receptor for membrane-bound ligands Jagged-1 (JAG1), Jagged-2 (JAG2) and Delta-1 (DLL1) to regulate cell-fate determination. Upon ligand activation through the released notch intracellular domain (NICD) it forms a transcriptional activator complex with RBPJ/RBPSUH and activates genes of the enhancer of split locus. Affects the implementation of differentiation, proliferation and apoptotic programs. Involved in angiogenesis; negatively regulates endothelial cell proliferation and migration and angiogenic sprouting. Involved in the maturation of both CD4(+) and CD8(+) cells in the thymus. Important for follicular differentiation and possibly cell fate selection within the follicle. During cerebellar development, functions as a receptor for neuronal DNER and is involved in the differentiation of Bergmann glia. Represses neuronal and myogenic differentiation. May play an essential role in postimplantation development, probably in some aspect of cell specification and/or differentiation. May be involved in mesoderm development, somite formation and neurogenesis. Involved in determination of left/right symmetry by modulating the balance between motile and immotile (sensory) cilia at the left-right organiser (LRO). The polypeptide is Neurogenic locus notch homolog protein 1 (notch1a) (Danio rerio (Zebrafish)).